The sequence spans 998 residues: SEC23-interacting protein (998 aa).

Residues 1–363 are interaction with SEC23A; the sequence is MADRKANGGG…YTEEFSEKLE (363 aa). The tract at residues 50-246 is disordered; sequence LPGEDSTDVG…AQQQVPARPA (197 aa). Positions 54–63 are enriched in acidic residues; that stretch reads DSTDVGEEDS. A compositionally biased stretch (polar residues) spans 65 to 78; sequence LGQTSTHTSTPQTF. Residues 79-88 are compositionally biased toward low complexity; the sequence is SYFSQVSSSS. 3 stretches are compositionally biased toward polar residues: residues 94-108, 143-158, and 232-241; these read IGQSPLTTSAMSAGQ, PPSQMGTSTYSPSQPS, and AMQSPAQQQV. At S600 the chain carries Phosphoserine. Residues 640–703 form the SAM domain; sequence EEPLTLHGTL…NFVKLKAAKL (64 aa). Residues 720-742 are disordered; sequence TKGQDESAPKTKEMASPSSESNE. The span at 722–732 shows a compositional bias: basic and acidic residues; the sequence is GQDESAPKTKE. Phosphoserine is present on residues S735, S748, and S924. Positions 777–987 constitute a DDHD domain; the sequence is LDFEPEIFFA…ALLLLKEIYR (211 aa).

Belongs to the PA-PLA1 family. As to quaternary structure, interacts with SEC23A.

The protein localises to the cytoplasmic vesicle. Its subcellular location is the COPII-coated vesicle membrane. It is found in the endoplasmic reticulum. Functionally, plays a role in the organization of endoplasmic reticulum exit sites. Specifically binds to phosphatidylinositol 3-phosphate (PI(3)P), phosphatidylinositol 4-phosphate (PI(4)P) and phosphatidylinositol 5-phosphate (PI(5)P). This Mus musculus (Mouse) protein is SEC23-interacting protein (Sec23ip).